Here is a 235-residue protein sequence, read N- to C-terminus: Methylosome subunit pICln (235 aa).

The segment at 1–21 (MSFLKSFPPPGSAEGLRQQQP) is disordered. Ser2 carries the N-acetylserine modification. Residues Ser100, Ser142, Ser191, Ser193, Ser196, and Ser208 each carry the phosphoserine modification. Residues 133-157 (LHPDPEDEDSDDYDGEEYDVEAHEQ) are disordered. A compositionally biased stretch (acidic residues) spans 137 to 151 (PEDEDSDDYDGEEYD). Residues 195–217 (SSQYNMAGVRTEDSTRDYEDGME) form a disordered region. Positions 204-213 (RTEDSTRDYE) are enriched in basic and acidic residues. Position 221 is a phosphothreonine (Thr221).

It belongs to the pICln (TC 1.A.47) family. As to quaternary structure, component of the methylosome, a 20S complex containing at least PRMT5/SKB1, WDR77/MEP50 and CLNS1A/pICln. May mediate SNRPD1 and SNRPD3 methylation. Forms a 6S pICln-Sm complex composed of CLNS1A/pICln, SNRPD1, SNRPD2, SNRPE, SNRPF and SNRPG; ring-like structure where CLNS1A/pICln mimics additional Sm proteins and which is unable to assemble into the core snRNP. Interacts with LSM10 and LSM11.

It localises to the cytoplasm. It is found in the cytosol. The protein resides in the nucleus. Its subcellular location is the cytoskeleton. Functionally, involved in both the assembly of spliceosomal snRNPs and the methylation of Sm proteins. Chaperone that regulates the assembly of spliceosomal U1, U2, U4 and U5 small nuclear ribonucleoproteins (snRNPs), the building blocks of the spliceosome, and thereby plays an important role in the splicing of cellular pre-mRNAs. Most spliceosomal snRNPs contain a common set of Sm proteins SNRPB, SNRPD1, SNRPD2, SNRPD3, SNRPE, SNRPF and SNRPG that assemble in a heptameric protein ring on the Sm site of the small nuclear RNA to form the core snRNP (Sm core). In the cytosol, the Sm proteins SNRPD1, SNRPD2, SNRPE, SNRPF and SNRPG are trapped in an inactive 6S pICln-Sm complex by the chaperone CLNS1A that controls the assembly of the core snRNP. Dissociation by the SMN complex of CLNS1A from the trapped Sm proteins and their transfer to an SMN-Sm complex triggers the assembly of core snRNPs and their transport to the nucleus. This is Methylosome subunit pICln (CLNS1A) from Canis lupus familiaris (Dog).